The sequence spans 348 residues: Mitochondrial glycine transporter (348 aa).

Solcar repeat units lie at residues 10–94, 130–214, and 249–333; these read TKST…IREN, LSNT…SKQH, and RAAS…LIRR. A run of 6 helical transmembrane segments spans residues 16-41, 69-95, 136-161, 189-212, 253-279, and 308-326; these read FVAG…TRVQ, GTLP…RENA, LLAG…VRYE, GFGA…EKSK, INFA…KTRI, and GLAL…AWTV.

Belongs to the mitochondrial carrier (TC 2.A.29) family. SLC25A38 subfamily.

The protein localises to the mitochondrion inner membrane. The enzyme catalyses glycine(in) = glycine(out). Functionally, mitochondrial glycine transporter that imports glycine into the mitochondrial matrix. Plays an important role in providing glycine for the first enzymatic step in heme biosynthesis, the condensation of glycine with succinyl-CoA to produce 5-aminolevulinate (ALA) in the mitochondrial matrix. This chain is Mitochondrial glycine transporter (mic-13), found in Neurospora crassa (strain ATCC 24698 / 74-OR23-1A / CBS 708.71 / DSM 1257 / FGSC 987).